A 107-amino-acid chain; its full sequence is Nucleoid-associated protein RP866 (107 aa).

This sequence belongs to the YbaB/EbfC family. As to quaternary structure, homodimer.

Its subcellular location is the cytoplasm. The protein resides in the nucleoid. Its function is as follows. Binds to DNA and alters its conformation. May be involved in regulation of gene expression, nucleoid organization and DNA protection. The polypeptide is Nucleoid-associated protein RP866 (Rickettsia prowazekii (strain Madrid E)).